Reading from the N-terminus, the 346-residue chain is KH domain-containing, RNA-binding, signal transduction-associated protein 3 (346 aa).

The involved in homodimerization stretch occupies residues 1–160 (MEEKYLPELM…IKKFLIPDYN (160 aa)). Lysine 4 participates in a covalent cross-link: Glycyl lysine isopeptide (Lys-Gly) (interchain with G-Cter in SUMO2). The KH domain occupies 61–127 (LIPVKQFPKF…AKYFHLNDDL (67 aa)). Disordered regions lie at residues 212–266 (RPVA…QETY) and 317–346 (GQEE…YGRY). The segment covering 253–262 (GYRPPPPPPT) has biased composition (pro residues).

The protein belongs to the KHDRBS family. As to quaternary structure, self-associates to form homooligomers; dimerization increases RNA affinity. Interacts with KHDRBS2/SLM-1. Interacts with KHDRBS1/SAM68; heterooligomer formation of KHDRBS family proteins may modulate RNA substrate specificity. Interacts with the splicing regulatory proteins SFRS9, SAFB and YTHDC1. Interacts with HNRPL, RBMX, p85 subunit of PI3-kinase, SERPINB5. In terms of processing, phosphorylated on tyrosine residues by PTK6. As to expression, highly expressed in testis and brain. In adult cerebellum expressed predominantly in internal granular layer interneurons and in hippocampus is exclusively expressed in CA neurons; expression is restricted to neuronal subpopulations largely non-overlapping with expression of KHDRBS2/SLM-1.

The protein resides in the nucleus. In terms of biological role, RNA-binding protein that plays a role in the regulation of alternative splicing and influences mRNA splice site selection and exon inclusion. Binds preferentially to the 5'-[AU]UAAA-3' motif in vitro. Binds optimally to RNA containing 5'-[AU]UAA-3' as a bipartite motif spaced by more than 15 nucleotides. Binds poly(A). RNA-binding abilities are down-regulated by tyrosine kinase PTK6. Involved in splice site selection of vascular endothelial growth factor. In vitro regulates CD44 alternative splicing by direct binding to purine-rich exonic enhancer. Can regulate alternative splicing of neurexins NRXN1-3 in the laminin G-like domain 6 containing the evolutionary conserved neurexin alternative spliced segment 4 (AS4) involved in neurexin selective targeting to postsynaptic partners such as neuroligins and LRRTM family members. High concentrations in forebrain structures block splicing inclusion of NRXN1-3 AS4 exons while low concentrations favor their inclusion. Targeted, cell-type specific splicing regulation of NRXN1 at AS4 is involved in neuronal glutamatergic synapse function and plasticity and is linked to behavioral aspects. Regulates expression of KHDRBS2/SLIM-1 in defined neuron populations in the hippocampus by modifying its alternative splicing resulting in a transcript predicted to undergo nonsense-mediated decay. Can bind FABP9 mRNA. May play a role as a negative regulator of cell growth. Inhibits cell proliferation. The polypeptide is KH domain-containing, RNA-binding, signal transduction-associated protein 3 (Khdrbs3) (Mus musculus (Mouse)).